The following is a 248-amino-acid chain: 1-(5-phosphoribosyl)-5-[(5-phosphoribosylamino)methylideneamino] imidazole-4-carboxamide isomerase (248 aa).

Asp-8 serves as the catalytic Proton acceptor. Catalysis depends on Asp-129, which acts as the Proton donor.

Belongs to the HisA/HisF family.

It is found in the cytoplasm. The enzyme catalyses 1-(5-phospho-beta-D-ribosyl)-5-[(5-phospho-beta-D-ribosylamino)methylideneamino]imidazole-4-carboxamide = 5-[(5-phospho-1-deoxy-D-ribulos-1-ylimino)methylamino]-1-(5-phospho-beta-D-ribosyl)imidazole-4-carboxamide. It functions in the pathway amino-acid biosynthesis; L-histidine biosynthesis; L-histidine from 5-phospho-alpha-D-ribose 1-diphosphate: step 4/9. The polypeptide is 1-(5-phosphoribosyl)-5-[(5-phosphoribosylamino)methylideneamino] imidazole-4-carboxamide isomerase (Rhizobium etli (strain CIAT 652)).